The chain runs to 663 residues: UvrABC system protein B (663 aa).

Residues 30-414 (EGIKAGKRHQ…IEHTDKMVEQ (385 aa)) enclose the Helicase ATP-binding domain. 43 to 50 (GATGTGKT) lines the ATP pocket. The Beta-hairpin signature appears at 96–119 (YYDYYQPEAYVPSTDTFIEKDASI). A Helicase C-terminal domain is found at 434 to 600 (QIDDLLSEIQ…TINKKIHDLI (167 aa)). The UVR domain occupies 627-662 (QKTIDNIEKEMKQAAKDLDFEKATELRDMLFELKAE).

This sequence belongs to the UvrB family. In terms of assembly, forms a heterotetramer with UvrA during the search for lesions. Interacts with UvrC in an incision complex.

It is found in the cytoplasm. In terms of biological role, the UvrABC repair system catalyzes the recognition and processing of DNA lesions. A damage recognition complex composed of 2 UvrA and 2 UvrB subunits scans DNA for abnormalities. Upon binding of the UvrA(2)B(2) complex to a putative damaged site, the DNA wraps around one UvrB monomer. DNA wrap is dependent on ATP binding by UvrB and probably causes local melting of the DNA helix, facilitating insertion of UvrB beta-hairpin between the DNA strands. Then UvrB probes one DNA strand for the presence of a lesion. If a lesion is found the UvrA subunits dissociate and the UvrB-DNA preincision complex is formed. This complex is subsequently bound by UvrC and the second UvrB is released. If no lesion is found, the DNA wraps around the other UvrB subunit that will check the other stand for damage. This chain is UvrABC system protein B, found in Staphylococcus aureus (strain MSSA476).